A 213-amino-acid chain; its full sequence is Superoxide dismutase [Fe] (213 aa).

4 residues coordinate Fe cation: H26, H73, D156, and H160.

The protein belongs to the iron/manganese superoxide dismutase family. Homodimer. Requires Fe cation as cofactor.

The catalysed reaction is 2 superoxide + 2 H(+) = H2O2 + O2. In terms of biological role, destroys superoxide anion radicals which are normally produced within the cells and which are toxic to biological systems. The polypeptide is Superoxide dismutase [Fe] (sodB) (Helicobacter pylori (strain J99 / ATCC 700824) (Campylobacter pylori J99)).